A 231-amino-acid chain; its full sequence is Thymidylate kinase (231 aa).

10 to 17 (GGEGAGKT) is a binding site for ATP.

It belongs to the thymidylate kinase family.

It catalyses the reaction dTMP + ATP = dTDP + ADP. In terms of biological role, phosphorylation of dTMP to form dTDP in both de novo and salvage pathways of dTTP synthesis. The chain is Thymidylate kinase from Acaryochloris marina (strain MBIC 11017).